We begin with the raw amino-acid sequence, 161 residues long: Large ribosomal subunit protein bL21m (161 aa).

Residues 1–35 (MLQLKFIWPVARITPIYRPFTSHPFRNLATSSSIS) constitute a mitochondrion transit peptide.

Belongs to the bacterial ribosomal protein bL21 family. As to quaternary structure, component of the mitochondrial large ribosomal subunit (mt-LSU). Mature yeast 74S mitochondrial ribosomes consist of a small (37S) and a large (54S) subunit. The 37S small subunit contains a 15S ribosomal RNA (15S mt-rRNA) and 34 different proteins. The 54S large subunit contains a 21S rRNA (21S mt-rRNA) and 46 different proteins.

It localises to the mitochondrion. Functionally, component of the mitochondrial ribosome (mitoribosome), a dedicated translation machinery responsible for the synthesis of mitochondrial genome-encoded proteins, including at least some of the essential transmembrane subunits of the mitochondrial respiratory chain. The mitoribosomes are attached to the mitochondrial inner membrane and translation products are cotranslationally integrated into the membrane. This is Large ribosomal subunit protein bL21m (MRPL49) from Saccharomyces cerevisiae (strain ATCC 204508 / S288c) (Baker's yeast).